The primary structure comprises 136 residues: Ribosome-binding factor A (136 aa).

Belongs to the RbfA family. In terms of assembly, monomer. Binds 30S ribosomal subunits, but not 50S ribosomal subunits or 70S ribosomes.

The protein localises to the cytoplasm. In terms of biological role, one of several proteins that assist in the late maturation steps of the functional core of the 30S ribosomal subunit. Associates with free 30S ribosomal subunits (but not with 30S subunits that are part of 70S ribosomes or polysomes). Required for efficient processing of 16S rRNA. May interact with the 5'-terminal helix region of 16S rRNA. In Rhodopseudomonas palustris (strain BisB5), this protein is Ribosome-binding factor A.